A 224-amino-acid polypeptide reads, in one-letter code: ATP-dependent dethiobiotin synthetase BioD (224 aa).

ATP is bound at residue 12-17; the sequence is EVGKTV. Residue Thr-16 coordinates Mg(2+). The active site involves Lys-34. Thr-38 contributes to the substrate binding site. Residues Asp-47, 106–109, 166–167, and 196–198 each bind ATP; these read EGAG, GS, and PEG. Positions 47 and 106 each coordinate Mg(2+).

It belongs to the dethiobiotin synthetase family. In terms of assembly, homodimer. Mg(2+) serves as cofactor.

It is found in the cytoplasm. The catalysed reaction is (7R,8S)-7,8-diammoniononanoate + CO2 + ATP = (4R,5S)-dethiobiotin + ADP + phosphate + 3 H(+). It functions in the pathway cofactor biosynthesis; biotin biosynthesis; biotin from 7,8-diaminononanoate: step 1/2. Functionally, catalyzes a mechanistically unusual reaction, the ATP-dependent insertion of CO2 between the N7 and N8 nitrogen atoms of 7,8-diaminopelargonic acid (DAPA, also called 7,8-diammoniononanoate) to form a ureido ring. The sequence is that of ATP-dependent dethiobiotin synthetase BioD from Saccharopolyspora erythraea (strain ATCC 11635 / DSM 40517 / JCM 4748 / NBRC 13426 / NCIMB 8594 / NRRL 2338).